The following is a 369-amino-acid chain: Chaperone protein DnaJ (369 aa).

The 66-residue stretch at 5–70 folds into the J domain; the sequence is DYYEVLGVGR…NKRAAYDQFG (66 aa). The segment at 128-206 adopts a CR-type zinc-finger fold; the sequence is GAETQIRIPR…CHGAGWVKRQ (79 aa). Residues Cys141, Cys144, Cys158, Cys161, Cys180, Cys183, Cys194, and Cys197 each contribute to the Zn(2+) site. CXXCXGXG motif repeat units follow at residues 141 to 148, 158 to 165, 180 to 187, and 194 to 201; these read CDTCHGSG, CPTCNGHG, CSHCQGSG, and CGDCHGAG.

It belongs to the DnaJ family. In terms of assembly, homodimer. Zn(2+) serves as cofactor.

The protein localises to the cytoplasm. Functionally, participates actively in the response to hyperosmotic and heat shock by preventing the aggregation of stress-denatured proteins and by disaggregating proteins, also in an autonomous, DnaK-independent fashion. Unfolded proteins bind initially to DnaJ; upon interaction with the DnaJ-bound protein, DnaK hydrolyzes its bound ATP, resulting in the formation of a stable complex. GrpE releases ADP from DnaK; ATP binding to DnaK triggers the release of the substrate protein, thus completing the reaction cycle. Several rounds of ATP-dependent interactions between DnaJ, DnaK and GrpE are required for fully efficient folding. Also involved, together with DnaK and GrpE, in the DNA replication of plasmids through activation of initiation proteins. This is Chaperone protein DnaJ from Nitrosomonas europaea (strain ATCC 19718 / CIP 103999 / KCTC 2705 / NBRC 14298).